The following is a 575-amino-acid chain: MITMINNKTFNRKTTGTLKKLVLSSDKSLRRSFNGASSTKDFVFSESSKVEEWWESARFKNISRPYSATDVVKHRGSLPANTSIYPSSYQARKLFNLLEENFKNGTPLHTLGVIDPVQMSQLARCRNIKVAYISGWACSSTLVGSTNEVSPDFGDYPYDTVPNQVERIFKAQQLHDRKAFLEASIKGSTPVDYLKPIIADADMGHGGPTTVMKVAKLFAEKGAAGIHLEDQMVGGKRCGHLSGAVLVPTATHLMRLISTRFQWDIMGTENLVIARTDSCNGKLLSSSSDPRDHEFIRGIIRDNVVPWSEKLIEMEDKKIPNSAIADMEKEWYHENELFTFEEALEKQFTASEFESYKEKKEDLMVNKLGRAYLSLREMKLLAQEVTPLKKIIFDWDAPRTKEGYYMFNGCIEAAIRRSLVFAPYSDMIWLETKTPDLEQARSFSRKIHKQLPATKLVYNLSPSFNWSAHGFDDKALKSFVWDLAKEGFTLQLVSLAGLHSDGVSFWELANSFQSDGMKAYVEKVQKREKETNCDIMTHQLWSGAEYVDSLMKVVQNGASSQTLSTSGESFTETQF.

Cys238 is an active-site residue.

The protein belongs to the isocitrate lyase/PEP mutase superfamily. Isocitrate lyase family.

It is found in the mitochondrion matrix. The enzyme catalyses (2S,3R)-3-hydroxybutane-1,2,3-tricarboxylate = pyruvate + succinate. It functions in the pathway organic acid metabolism; propanoate degradation. In terms of biological role, catalyzes the formation of pyruvate and succinate from 2-methylisocitrate during the metabolism of endogenous propionyl-CoA. Does not act on isocitrate. The polypeptide is Mitochondrial 2-methylisocitrate lyase ICL2 (ICL2) (Saccharomyces cerevisiae (strain ATCC 204508 / S288c) (Baker's yeast)).